A 178-amino-acid chain; its full sequence is Interleukin-17B (178 aa).

The N-terminal stretch at Met1–Pro22 is a signal peptide. The disordered stretch occupies residues Gln21–Gln44. N-linked (GlcNAc...) asparagine glycosylation occurs at Asn75. Intrachain disulfides connect Cys121/Cys176 and Cys126/Cys178.

Belongs to the IL-17 family.

Its subcellular location is the secreted. Stimulates the release of tumor necrosis factor alpha and IL-1-beta from the monocytic cell line THP-1. The protein is Interleukin-17B (IL17B) of Mesocricetus auratus (Golden hamster).